A 128-amino-acid polypeptide reads, in one-letter code: Small ribosomal subunit protein eS8 (128 aa).

The protein belongs to the eukaryotic ribosomal protein eS8 family. In terms of assembly, part of the 30S ribosomal subunit.

This is Small ribosomal subunit protein eS8 from Methanococcus maripaludis (strain C7 / ATCC BAA-1331).